A 284-amino-acid polypeptide reads, in one-letter code: Short chain dehydrogenase/reductase AacuD (284 aa).

Residue valine 37 participates in NADP(+) binding. Active-site proton donor residues include serine 166 and tyrosine 180. NADP(+) is bound by residues tyrosine 180, lysine 184, and threonine 215. Lysine 184 serves as the catalytic Lowers pKa of active site Tyr.

This sequence belongs to the short-chain dehydrogenases/reductases (SDR) family.

It participates in secondary metabolite biosynthesis. In terms of biological role, short chain dehydrogenase/reductase; part of the gene cluster that mediates the biosynthesis of the tetrahydroxanthone dimer secalonic acid D. The pathway begins with the synthesis of atrochrysone thioester by the polyketide synthase AacuL. The atrochrysone carboxyl ACP thioesterase AacuM then breaks the thioester bond and releases the atrochrysone carboxylic acid from AacuL. Atrochrysone carboxylic acid is decarboxylated by the decarboxylase AacuI, and oxidized by the anthrone oxygenase AacuG to yield emodin. Emodin is then reduced to emodin hydroquinone by a yet unidentified oxidoreductase. A-ring reduction by the short chain dehydrogenase AacuN, dehydration by the scytalone dehydratase-like protein AacuK and probable spontaneous re-oxidation, results in overall deoxygenation to chrysophanol. Baeyer-Villiger oxidation by the Baeyer-Villiger monooxygenase (BVMO) AacuH then yields monodictyphenone. Monodictyphenone is transformed into compounds with the tetrahydroxanthone skeleton via methylesterification by the methyltransferase AacuQ, followed by the action of the flavin-dependent monooxygenase AacuC, the isomerase AacuP, and the short chain dehydrogenase/reductase AacuF or AacuD. AacuF and AacuD should accept the same compound as a substrate but perform the ketoreduction with a different stereoselectivity, thus yielding blennolides B and A, respectively. In the final step of the biosynthesis, the cytochrome P450 monooxygenase AacuE accepts blennolide B and/or blennolide A to conduct the dimerization reaction to furnish the tetrahydroxanthone dimers, secalonic acids D, B, and F. This is Short chain dehydrogenase/reductase AacuD from Aspergillus aculeatus (strain ATCC 16872 / CBS 172.66 / WB 5094).